The sequence spans 248 residues: Type II secretion system protein N (248 aa).

Topologically, residues 1–6 (MKLKSG) are cytoplasmic. The chain crosses the membrane as a helical; Signal-anchor for type II membrane protein span at residues 7 to 27 (IVTGVALVLAYGLFLASYAPA). Residues 28–248 (RLLTAVPLPA…RTLNFQGRLL (221 aa)) lie on the Periplasmic side of the membrane.

It belongs to the GSP N family.

It is found in the cell inner membrane. Functionally, involved in a type II secretion system (T2SS, formerly general secretion pathway, GSP) for the export of proteins. Required for the translocation of the multiple pectic enzymes. This chain is Type II secretion system protein N (outN), found in Pectobacterium carotovorum subsp. carotovorum (Erwinia carotovora subsp. carotovora).